Reading from the N-terminus, the 333-residue chain is Phosphate acyltransferase (333 aa).

Belongs to the PlsX family. Homodimer. Probably interacts with PlsY.

It localises to the cytoplasm. It carries out the reaction a fatty acyl-[ACP] + phosphate = an acyl phosphate + holo-[ACP]. Its pathway is lipid metabolism; phospholipid metabolism. Catalyzes the reversible formation of acyl-phosphate (acyl-PO(4)) from acyl-[acyl-carrier-protein] (acyl-ACP). This enzyme utilizes acyl-ACP as fatty acyl donor, but not acyl-CoA. The polypeptide is Phosphate acyltransferase (Thermoanaerobacterium thermosaccharolyticum (strain ATCC 7956 / DSM 571 / NCIMB 9385 / NCA 3814 / NCTC 13789 / WDCM 00135 / 2032) (Clostridium thermosaccharolyticum)).